Consider the following 158-residue polypeptide: MGKVESFELDHTKVKAPYVRLITVEEGKKGDKISNFDLRLVQPNENAIPTGGLHTIEHLLAGLLRDRIDGYIDCSPFGCRTGFHLLVWGTPSTTDVAKALKEALEEIRDKIQWEDVPGTTIKSCGNYRDHSLFSAKQWSRDILEKGISDDPFERNVVE.

Fe cation is bound by residues histidine 54, histidine 58, and cysteine 124.

This sequence belongs to the LuxS family. Homodimer. The cofactor is Fe cation.

It catalyses the reaction S-(5-deoxy-D-ribos-5-yl)-L-homocysteine = (S)-4,5-dihydroxypentane-2,3-dione + L-homocysteine. Involved in the synthesis of autoinducer 2 (AI-2) which is secreted by bacteria and is used to communicate both the cell density and the metabolic potential of the environment. The regulation of gene expression in response to changes in cell density is called quorum sensing. Catalyzes the transformation of S-ribosylhomocysteine (RHC) to homocysteine (HC) and 4,5-dihydroxy-2,3-pentadione (DPD). The sequence is that of S-ribosylhomocysteine lyase from Lactobacillus gasseri (strain ATCC 33323 / DSM 20243 / BCRC 14619 / CIP 102991 / JCM 1131 / KCTC 3163 / NCIMB 11718 / NCTC 13722 / AM63).